A 505-amino-acid polypeptide reads, in one-letter code: Glucan endo-1,3-beta-glucosidase 2 (505 aa).

Residues 1–20 (MASLLHLLLLSLSLLVLASA) form the signal peptide. The N-linked (GlcNAc...) asparagine glycan is linked to N97. Catalysis depends on E125, which acts as the Proton donor. N-linked (GlcNAc...) asparagine glycans are attached at residues N180 and N262. The Nucleophile role is filled by E272. 3 N-linked (GlcNAc...) asparagine glycosylation sites follow: N304, N361, and N365. The cysteines at positions 369 and 432 are disulfide-linked. N-linked (GlcNAc...) asparagine glycans are attached at residues N461, N466, and N473. The GPI-anchor amidated serine moiety is linked to residue S477. Residues 478–505 (SGIRSDLYYSRGIWSILTVMILNVANIL) constitute a propeptide, removed in mature form.

Belongs to the glycosyl hydrolase 17 family. Post-translationally, contains two additional disulfide bonds.

The protein localises to the cell membrane. The enzyme catalyses Hydrolysis of (1-&gt;3)-beta-D-glucosidic linkages in (1-&gt;3)-beta-D-glucans.. This is Glucan endo-1,3-beta-glucosidase 2 from Arabidopsis thaliana (Mouse-ear cress).